The following is a 413-amino-acid chain: Imidazolonepropionase (413 aa).

The Fe(3+) site is built by histidine 70 and histidine 72. Residues histidine 70 and histidine 72 each contribute to the Zn(2+) site. Arginine 79, tyrosine 142, and histidine 175 together coordinate 4-imidazolone-5-propanoate. An N-formimidoyl-L-glutamate-binding site is contributed by tyrosine 142. Residue histidine 240 coordinates Fe(3+). Histidine 240 is a binding site for Zn(2+). 4-imidazolone-5-propanoate is bound at residue glutamate 243. Aspartate 315 contacts Fe(3+). Aspartate 315 contacts Zn(2+). Residues asparagine 317 and glycine 319 each coordinate N-formimidoyl-L-glutamate. Serine 320 contacts 4-imidazolone-5-propanoate.

It belongs to the metallo-dependent hydrolases superfamily. HutI family. It depends on Zn(2+) as a cofactor. Requires Fe(3+) as cofactor.

The protein localises to the cytoplasm. It catalyses the reaction 4-imidazolone-5-propanoate + H2O = N-formimidoyl-L-glutamate. It participates in amino-acid degradation; L-histidine degradation into L-glutamate; N-formimidoyl-L-glutamate from L-histidine: step 3/3. Catalyzes the hydrolytic cleavage of the carbon-nitrogen bond in imidazolone-5-propanoate to yield N-formimidoyl-L-glutamate. It is the third step in the universal histidine degradation pathway. The protein is Imidazolonepropionase of Treponema denticola (strain ATCC 35405 / DSM 14222 / CIP 103919 / JCM 8153 / KCTC 15104).